The primary structure comprises 198 residues: Recombination protein RecR (198 aa).

Residues 56–71 (CDTCGNVDTQNPCGIC) form a C4-type zinc finger. Residues 79–174 (KSICVVEDVA…RITQLAHGLP (96 aa)) form the Toprim domain.

Belongs to the RecR family.

Functionally, may play a role in DNA repair. It seems to be involved in an RecBC-independent recombinational process of DNA repair. It may act with RecF and RecO. This chain is Recombination protein RecR, found in Erythrobacter litoralis (strain HTCC2594).